Here is a 215-residue protein sequence, read N- to C-terminus: GTP-binding nuclear protein Ran (215 aa).

A Small GTPase Ran-type domain is found at 6–170; sequence DIPTFKLVLV…LWLARKLLGD (165 aa). GTP-binding positions include 17–24, 35–41, Gly67, 121–124, and 149–151; these read DGGTGKTT, EKKYVAT, NKVD, and SAK. Residues 36-44 form a switch-I region; it reads KKYVATLGV. The interval 67–83 is switch-II; that stretch reads GQEKFGGLRDGYYIQGQ.

It belongs to the small GTPase superfamily. Ran family. In terms of assembly, found in a nuclear export complex with RanGTP, exportin and pre-miRNA.

The protein localises to the nucleus. GTP-binding protein involved in nucleocytoplasmic transport. Required for the import of protein into the nucleus and also for RNA export. Involved in chromatin condensation and control of cell cycle. The polypeptide is GTP-binding nuclear protein Ran (Brugia malayi (Filarial nematode worm)).